A 436-amino-acid chain; its full sequence is Enolase (436 aa).

Q167 provides a ligand contact to (2R)-2-phosphoglycerate. Catalysis depends on E209, which acts as the Proton donor. Mg(2+)-binding residues include D246, E291, and D318. (2R)-2-phosphoglycerate is bound by residues K343, R372, S373, and K394. The Proton acceptor role is filled by K343.

It belongs to the enolase family. In terms of assembly, component of the RNA degradosome, a multiprotein complex involved in RNA processing and mRNA degradation. It depends on Mg(2+) as a cofactor.

Its subcellular location is the cytoplasm. It localises to the secreted. The protein resides in the cell surface. The catalysed reaction is (2R)-2-phosphoglycerate = phosphoenolpyruvate + H2O. Its pathway is carbohydrate degradation; glycolysis; pyruvate from D-glyceraldehyde 3-phosphate: step 4/5. Catalyzes the reversible conversion of 2-phosphoglycerate (2-PG) into phosphoenolpyruvate (PEP). It is essential for the degradation of carbohydrates via glycolysis. The polypeptide is Enolase (Actinobacillus pleuropneumoniae serotype 5b (strain L20)).